Reading from the N-terminus, the 614-residue chain is Kelch-like protein 40 (614 aa).

The BTB domain occupies 33–100; it reads IDCVLKIQGK…IYTSEIEITE (68 aa). In terms of domain architecture, BACK spans 135–237; the sequence is CLAIFRLGLL…PQDYIKNKVE (103 aa). 5 Kelch repeats span residues 353–405, 406–455, 456–503, 504–550, and 552–606; these read QLFV…ESEN, SIYL…SHDN, LVYV…VHKG, KIFI…SMNG, and LYAI…AARL.

The protein belongs to the KLHL40 family. Component of the BCR(KLHL40) E3 ubiquitin ligase complex.

The protein resides in the cytoplasm. It is found in the myofibril. The protein localises to the sarcomere. It localises to the a band. Its subcellular location is the i band. In terms of biological role, substrate-specific adapter of a BCR (BTB-CUL3-RBX1) E3 ubiquitin ligase complex that acts as a key regulator of skeletal muscle development. This is Kelch-like protein 40 (klhl40) from Xenopus laevis (African clawed frog).